The chain runs to 645 residues: 1-phosphatidylinositol 4,5-bisphosphate phosphodiesterase zeta-1 (645 aa).

In terms of domain architecture, EF-hand spans 42-77 (CHFAHVKRIFKENDRHNQGRITTEDFRTIYRCIVHR). A PI-PLC X-box domain is found at 162 to 306 (QDMNKPLNDY…LKFKILVKNK (145 aa)). Residues His-177 and His-222 contribute to the active site. The PI-PLC Y-box domain maps to 385 to 501 (LSDLVIYTKA…GYVLKPDFLR (117 aa)). Positions 501-625 (RDTTLGFNPN…KGYRRVPLFS (125 aa)) constitute a C2 domain.

In terms of assembly, interacts via its C2 domain with PtdIns(3)P and, to a lesser extent, PtdIns(5)P in vitro. Ca(2+) serves as cofactor.

Its subcellular location is the nucleus. It is found in the cytoplasm. The protein localises to the perinuclear region. It carries out the reaction a 1,2-diacyl-sn-glycero-3-phospho-(1D-myo-inositol-4,5-bisphosphate) + H2O = 1D-myo-inositol 1,4,5-trisphosphate + a 1,2-diacyl-sn-glycerol + H(+). The production of the second messenger molecules diacylglycerol (DAG) and inositol 1,4,5-trisphosphate (IP3) is mediated by activated phosphatidylinositol-specific phospholipase C enzymes. In vitro, hydrolyzes PtdIns(4,5)P2 in a Ca(2+)-dependent manner. Triggers intracellular Ca(2+) oscillations in oocytes solely during M phase and is involved in inducing oocyte activation and initiating embryonic development up to the blastocyst stage. Is therefore a strong candidate for the egg-activating soluble sperm factor that is transferred from the sperm into the egg cytoplasm following gamete membrane fusion. May exert an inhibitory effect on phospholipase-C-coupled processes that depend on calcium ions and protein kinase C, including CFTR trafficking and function. In Rattus norvegicus (Rat), this protein is 1-phosphatidylinositol 4,5-bisphosphate phosphodiesterase zeta-1.